Here is a 179-residue protein sequence, read N- to C-terminus: Shikimate kinase (179 aa).

12 to 17 (GVGKSK) contacts ATP. Residue Ser16 coordinates Mg(2+). Positions 34, 61, and 83 each coordinate substrate. Arg131 provides a ligand contact to ATP. Arg147 is a binding site for substrate.

The protein belongs to the shikimate kinase family. Monomer. The cofactor is Mg(2+).

Its subcellular location is the cytoplasm. It catalyses the reaction shikimate + ATP = 3-phosphoshikimate + ADP + H(+). The protein operates within metabolic intermediate biosynthesis; chorismate biosynthesis; chorismate from D-erythrose 4-phosphate and phosphoenolpyruvate: step 5/7. Its function is as follows. Catalyzes the specific phosphorylation of the 3-hydroxyl group of shikimic acid using ATP as a cosubstrate. This Leptospira borgpetersenii serovar Hardjo-bovis (strain JB197) protein is Shikimate kinase.